The following is a 691-amino-acid chain: Penicillin-binding protein 2D (691 aa).

Over 1–19 (MDAMTNKRLRLTLKTVRAF) the chain is Cytoplasmic. The helical; Signal-anchor for type II membrane protein transmembrane segment at 20–40 (IFLGAFAALAAAAVFMTVILI) threads the bilayer. The Extracellular segment spans residues 41–691 (AKYQGAPSVQ…WWDKWLGRHH (651 aa)). The segment at 55-223 (TILYASDGSK…PSGYSPYVNE (169 aa)) is transglycosylase. Residue glutamate 94 is the Proton donor; for transglycosylase activity of the active site. A transpeptidase region spans residues 327-605 (VGFSAIDPRT…AKTIWADFME (279 aa)). Serine 365 (acyl-ester intermediate; for transpeptidase activity) is an active-site residue. Residues 663-691 (AKQTKDRLPSKEKPASEKKWWDKWLGRHH) form a disordered region. Basic and acidic residues predominate over residues 664–691 (KQTKDRLPSKEKPASEKKWWDKWLGRHH).

It in the N-terminal section; belongs to the glycosyltransferase 51 family. This sequence in the C-terminal section; belongs to the transpeptidase family.

Its subcellular location is the cell membrane. It catalyses the reaction [GlcNAc-(1-&gt;4)-Mur2Ac(oyl-L-Ala-gamma-D-Glu-L-Lys-D-Ala-D-Ala)](n)-di-trans,octa-cis-undecaprenyl diphosphate + beta-D-GlcNAc-(1-&gt;4)-Mur2Ac(oyl-L-Ala-gamma-D-Glu-L-Lys-D-Ala-D-Ala)-di-trans,octa-cis-undecaprenyl diphosphate = [GlcNAc-(1-&gt;4)-Mur2Ac(oyl-L-Ala-gamma-D-Glu-L-Lys-D-Ala-D-Ala)](n+1)-di-trans,octa-cis-undecaprenyl diphosphate + di-trans,octa-cis-undecaprenyl diphosphate + H(+). The enzyme catalyses Preferential cleavage: (Ac)2-L-Lys-D-Ala-|-D-Ala. Also transpeptidation of peptidyl-alanyl moieties that are N-acyl substituents of D-alanine.. Its pathway is cell wall biogenesis; peptidoglycan biosynthesis. Functionally, involved in the polymerization and cross-linking of spore peptidoglycan. May be required for synthesis of the spore germ cell wall, the first layer of peptidoglycan synthesized on the surface of the inner forespore membrane. The polypeptide is Penicillin-binding protein 2D (pbpG) (Bacillus subtilis (strain 168)).